Reading from the N-terminus, the 141-residue chain is Hemoglobin subunit mu (141 aa).

A Globin domain is found at 1–141 (MLSAQERAQI…VAVVLTEKYR (141 aa)). Positions 58 and 87 each coordinate heme b.

The protein belongs to the globin family. Expressed in erythroid tissues.

The sequence is that of Hemoglobin subunit mu (HBM) from Homo sapiens (Human).